A 496-amino-acid chain; its full sequence is N-succinylglutamate 5-semialdehyde dehydrogenase (496 aa).

Gly-229 to Gly-234 contributes to the NAD(+) binding site. Catalysis depends on residues Glu-252 and Cys-286.

Belongs to the aldehyde dehydrogenase family. AstD subfamily.

The enzyme catalyses N-succinyl-L-glutamate 5-semialdehyde + NAD(+) + H2O = N-succinyl-L-glutamate + NADH + 2 H(+). The protein operates within amino-acid degradation; L-arginine degradation via AST pathway; L-glutamate and succinate from L-arginine: step 4/5. Functionally, catalyzes the NAD-dependent reduction of succinylglutamate semialdehyde into succinylglutamate. This chain is N-succinylglutamate 5-semialdehyde dehydrogenase, found in Legionella pneumophila subsp. pneumophila (strain Philadelphia 1 / ATCC 33152 / DSM 7513).